A 484-amino-acid chain; its full sequence is Serine/threonine-protein kinase RIO1 (484 aa).

The Protein kinase domain occupies 76 to 402 (ADLNGCLSTG…EFDNADHECS (327 aa)). ATP contacts are provided by Lys125 and Leu198. The active-site Proton acceptor is Asp244. Mg(2+) is bound by residues Asn249 and Asp261. Asp261 functions as the 4-aspartylphosphate intermediate in the catalytic mechanism. The interval 398–484 (DHECSSGTEE…KLVKKTKSKK (87 aa)) is disordered. Phosphoserine; by CK2 occurs at positions 402, 403, 409, 416, 417, and 419. An interaction with CKA2 region spans residues 403–484 (SGTEEFSDDE…KLVKKTKSKK (82 aa)). Positions 407 to 434 (EFSDDEEDGSSGSEEDDEEEGEYYDDDE) are enriched in acidic residues. An association with (pre-)40S ribosomal subunit region spans residues 440 to 484 (GKKHEDKDLKKLRKQEAKDAKREKRKTKVKKHIKKKLVKKTKSKK). Over residues 442-461 (KHEDKDLKKLRKQEAKDAKR) the composition is skewed to basic and acidic residues. The segment covering 462–484 (EKRKTKVKKHIKKKLVKKTKSKK) has biased composition (basic residues).

It belongs to the protein kinase superfamily. RIO-type Ser/Thr kinase family. In terms of assembly, interacts with CKA2. The cofactor is Mg(2+). Autophosphorylated. Phosphorylated by casein kinase II (CK2). Phosphorylation by CK2 stimulates RIO1 kinase activity and targets it for degradation at the G1/S transition of the cell cycle.

It is found in the cytoplasm. It catalyses the reaction L-seryl-[protein] + ATP = O-phospho-L-seryl-[protein] + ADP + H(+). The enzyme catalyses L-threonyl-[protein] + ATP = O-phospho-L-threonyl-[protein] + ADP + H(+). It carries out the reaction ATP + H2O = ADP + phosphate + H(+). Its function is as follows. Required for the final endonucleolytic cleavage at site D converting 20S pre-rRNA into the mature 18S rRNA. Required for the final steps of cytoplasmic maturation of the 40S ribosomal subunit. The association with the very late 40S subunit intermediate seems to follow RIO2 association with precursors of the 40S subunit and may involve a translation-like checkpoint point cycle preceeding the binding to the 60S ribosomal subunit. Despite the protein kinase domain is proposed to act predominantly as an ATPase. The catalytic activity regulates its dynamic association with the 40S subunit. Has a role in the cell cycle where it is required for entrance into S-phase and in the control of the onset of anaphase. Appears to also be involved in the maintenance of chromosome stability and correct mitotic segregation. In Saccharomyces cerevisiae (strain ATCC 204508 / S288c) (Baker's yeast), this protein is Serine/threonine-protein kinase RIO1 (RIO1).